Consider the following 158-residue polypeptide: NAD(P)H-quinone oxidoreductase subunit J, chloroplastic (158 aa).

This sequence belongs to the complex I 30 kDa subunit family. NDH is composed of at least 16 different subunits, 5 of which are encoded in the nucleus.

The protein resides in the plastid. It is found in the chloroplast thylakoid membrane. It catalyses the reaction a plastoquinone + NADH + (n+1) H(+)(in) = a plastoquinol + NAD(+) + n H(+)(out). It carries out the reaction a plastoquinone + NADPH + (n+1) H(+)(in) = a plastoquinol + NADP(+) + n H(+)(out). Functionally, NDH shuttles electrons from NAD(P)H:plastoquinone, via FMN and iron-sulfur (Fe-S) centers, to quinones in the photosynthetic chain and possibly in a chloroplast respiratory chain. The immediate electron acceptor for the enzyme in this species is believed to be plastoquinone. Couples the redox reaction to proton translocation, and thus conserves the redox energy in a proton gradient. The protein is NAD(P)H-quinone oxidoreductase subunit J, chloroplastic of Helianthus annuus (Common sunflower).